We begin with the raw amino-acid sequence, 212 residues long: uncharacterized protein (212 aa).

This is an uncharacterized protein from Saccharolobus islandicus (Sulfolobus islandicus).